The following is a 480-amino-acid chain: Peptidase S41 family protein ustP (480 aa).

The disordered stretch occupies residues 78–97 (CMPNKKSRPPDPRPSLAVGK). Positions 134-336 (DVAVLQLPTF…LKQQGVRSIV (203 aa)) are peptidase S41 domain.

The protein belongs to the peptidase S41A family.

The protein operates within mycotoxin biosynthesis. Functionally, peptidase S41 family protein; part of the gene cluster that mediates the biosynthesis of the secondary metabolite ustiloxin B, an antimitotic tetrapeptide. First, ustA is processed by the subtilisin-like endoprotease Kex2 that is outside the ustiloxin B gene cluster, at the C-terminal side of Arg-Lys, after transfer to Golgi apparatus through the endoplasmic reticulum (ER). Cleavage by KEX2 generates 16 peptides YAIG-I to YAIG-XVI. To process the precursor peptide further, at least two peptidases are necessary to cleave the N-terminal and C-terminal sides of the Tyr-Ala-Ile-Gly core peptide which serves as backbone for the synthesis of ustiloxin B, through cyclization and modification of the tyrosine with a non-protein coding amino acid, norvaline. One of the two peptidases must be the serine peptidase ustP; and the other pepdidase is probably ustH. Macrocyclization of the core peptide derived from ustA requires the tyrosinase ustQ, as well as the homologous oxidases ustYa and ustYb, and leads to the production of the first cyclization product N-desmethylustiloxin F. For the formation of N-desmethylustiloxin F, three oxidation steps are required, hydroxylation at the benzylic position, hydroxylation at either the aromatic ring of Tyr or beta-position of Ile, and oxidative cyclization. UstQ may catalyze the oxidation of a phenol moiety, whereas the ustYa and ustYb are most likely responsible for the remaining two-step oxidations. N-desmethylustiloxin F is then methylated by ustM to yield ustiloxin F which in turn substrate of the cytochrome P450 monooxygenase ustC which catalyzes the formation of S-deoxyustiloxin H. The flavoprotein monooxygenases ustF1 and ustF2 then participate in the modification of the side chain of S-deoxyustiloxin H, leading to the synthesis of an oxime intermediate, via ustiloxin H. Finally, carboxylative dehydration performed by the cysteine desulfurase-like protein ustD yields ustiloxin B. The sequence is that of Peptidase S41 family protein ustP from Aspergillus flavus (strain ATCC 200026 / FGSC A1120 / IAM 13836 / NRRL 3357 / JCM 12722 / SRRC 167).